Consider the following 122-residue polypeptide: Large ribosomal subunit protein uL14c (122 aa).

The protein belongs to the universal ribosomal protein uL14 family. Part of the 50S ribosomal subunit.

The protein resides in the plastid. It is found in the chloroplast. Functionally, binds to 23S rRNA. This chain is Large ribosomal subunit protein uL14c, found in Jasminum nudiflorum (Winter jasmine).